We begin with the raw amino-acid sequence, 79 residues long: Sec-independent protein translocase protein TatA (79 aa).

The chain crosses the membrane as a helical span at residues 1 to 21 (MGGFTSIWHWVIVLLVIVLLF). The disordered stretch occupies residues 54 to 79 (ELKTLDAQATQTKVHETSEIKSKQES). The span at 66 to 79 (KVHETSEIKSKQES) shows a compositional bias: basic and acidic residues.

This sequence belongs to the TatA/E family. As to quaternary structure, the Tat system comprises two distinct complexes: a TatABC complex, containing multiple copies of TatA, TatB and TatC subunits, and a separate TatA complex, containing only TatA subunits. Substrates initially bind to the TatABC complex, which probably triggers association of the separate TatA complex to form the active translocon.

Its subcellular location is the cell inner membrane. Part of the twin-arginine translocation (Tat) system that transports large folded proteins containing a characteristic twin-arginine motif in their signal peptide across membranes. TatA could form the protein-conducting channel of the Tat system. In Helicobacter pylori (strain J99 / ATCC 700824) (Campylobacter pylori J99), this protein is Sec-independent protein translocase protein TatA.